Consider the following 442-residue polypeptide: Protein PHYTOCHROME KINASE SUBSTRATE 2 (442 aa).

The segment at 110–130 (IFVGPKQSSKNSSETPSLRSE) is disordered. The segment covering 121–130 (SSETPSLRSE) has biased composition (low complexity). Phosphoserine is present on residues S239 and S245. Positions 394–442 (VSGDSYTSMNRTPSYVPRFPVEANPTSTETRRRISSSSVSHTQSPFLYT) are disordered. The segment covering 397-406 (DSYTSMNRTP) has biased composition (polar residues). Residues 428-442 (SSSSVSHTQSPFLYT) are compositionally biased toward low complexity.

This sequence belongs to the PKS family. As to quaternary structure, interacts with PKS1, RPT3, PHOT1 and PHOT2. Expressed in leaves, with the strongest expression on edges of the laminas. Not found in roots.

It is found in the cell membrane. Functionally, acts predominantly in the phot1 pathway. Involved in the leaf positioning and also in the phot2 pathway controlling the leaf flattening. Component of the network that modulates the very low-fluence response (VLFR) branch of phyA signaling. Regulates phytochrome-mediated photomorphogenesis and hypocotyl phototropism. May act by controlling auxin homeostasis. This is Protein PHYTOCHROME KINASE SUBSTRATE 2 (PKS2) from Arabidopsis thaliana (Mouse-ear cress).